The sequence spans 154 residues: Crossover junction endodeoxyribonuclease RuvC (154 aa).

Active-site residues include Asp7, Glu67, and Asp139. Mg(2+)-binding residues include Asp7, Glu67, and Asp139.

This sequence belongs to the RuvC family. In terms of assembly, homodimer which binds Holliday junction (HJ) DNA. The HJ becomes 2-fold symmetrical on binding to RuvC with unstacked arms; it has a different conformation from HJ DNA in complex with RuvA. In the full resolvosome a probable DNA-RuvA(4)-RuvB(12)-RuvC(2) complex forms which resolves the HJ. Mg(2+) is required as a cofactor.

The protein localises to the cytoplasm. It carries out the reaction Endonucleolytic cleavage at a junction such as a reciprocal single-stranded crossover between two homologous DNA duplexes (Holliday junction).. Functionally, the RuvA-RuvB-RuvC complex processes Holliday junction (HJ) DNA during genetic recombination and DNA repair. Endonuclease that resolves HJ intermediates. Cleaves cruciform DNA by making single-stranded nicks across the HJ at symmetrical positions within the homologous arms, yielding a 5'-phosphate and a 3'-hydroxyl group; requires a central core of homology in the junction. The consensus cleavage sequence is 5'-(A/T)TT(C/G)-3'. Cleavage occurs on the 3'-side of the TT dinucleotide at the point of strand exchange. HJ branch migration catalyzed by RuvA-RuvB allows RuvC to scan DNA until it finds its consensus sequence, where it cleaves and resolves the cruciform DNA. In Synechococcus sp. (strain WH7803), this protein is Crossover junction endodeoxyribonuclease RuvC.